Reading from the N-terminus, the 262-residue chain is Aminoglycoside (3'') (9) adenylyltransferase (262 aa).

Residues 1 to 157 (MTLSIPPSIQ…ERAERLFTPA (157 aa)) are adenylyltransferase domain. Positions 36, 46, and 47 each coordinate ATP. Positions 47, 49, and 87 each coordinate Mg(2+). The active-site Proton acceptor is glutamate 87. Aspartate 130 serves as a coordination point for ATP. The segment at 158–262 (PAAQLLKALR…AKAHIPTQFT (105 aa)) is helical domain. Streptomycin is bound by residues 173-178 (WQSTAD) and histidine 185. ATP is bound by residues lysine 205 and tyrosine 231.

As to quaternary structure, monomer.

The catalysed reaction is streptomycin + ATP = 3''-O-adenylylstreptomycin + diphosphate. It catalyses the reaction spectinomycin + ATP = 9-O-adenylylspectinomycin + diphosphate. Its function is as follows. Mediates bacterial resistance to the antibiotics streptomycin and spectinomycin, does not confer resistance to kanamycin. Binds ATP first, then antibiotic. The protein is Aminoglycoside (3'') (9) adenylyltransferase (aadA) of Salmonella typhimurium (strain LT2 / SGSC1412 / ATCC 700720).